We begin with the raw amino-acid sequence, 149 residues long: Transcriptional repressor NrdR (149 aa).

A zinc finger lies at 3 to 34; that stretch reads CPFCSATDTKVIDSRLVADGHQVRRRRECVQC. Positions 49–139 constitute an ATP-cone domain; sequence PRVVKQDGSR…VYRAFEDVSE (91 aa).

This sequence belongs to the NrdR family. Zn(2+) is required as a cofactor.

Functionally, negatively regulates transcription of bacterial ribonucleotide reductase nrd genes and operons by binding to NrdR-boxes. The polypeptide is Transcriptional repressor NrdR (Shewanella piezotolerans (strain WP3 / JCM 13877)).